The chain runs to 863 residues: Oleate activated transcription factor 3 (863 aa).

Residues C19–C47 constitute a DNA-binding region (zn(2)-C6 fungal-type). Over residues D52–L63 the composition is skewed to polar residues. The tract at residues D52–P81 is disordered.

Belongs to the OAF3 family.

The protein localises to the cytoplasm. Its subcellular location is the nucleus. It is found in the mitochondrion. Transcriptional inhibitor with a significantly increased number of target genes in response to oleate. In Saccharomyces cerevisiae (strain RM11-1a) (Baker's yeast), this protein is Oleate activated transcription factor 3 (OAF3).